We begin with the raw amino-acid sequence, 153 residues long: Deoxyuridine 5'-triphosphate nucleotidohydrolase (153 aa).

Substrate contacts are provided by residues Arg71–Gly73, Asn84, Thr88–Asp90, and Lys98.

Belongs to the dUTPase family. Requires Mg(2+) as cofactor.

It carries out the reaction dUTP + H2O = dUMP + diphosphate + H(+). It participates in pyrimidine metabolism; dUMP biosynthesis; dUMP from dCTP (dUTP route): step 2/2. Functionally, this enzyme is involved in nucleotide metabolism: it produces dUMP, the immediate precursor of thymidine nucleotides and it decreases the intracellular concentration of dUTP so that uracil cannot be incorporated into DNA. This chain is Deoxyuridine 5'-triphosphate nucleotidohydrolase, found in Wolbachia pipientis wMel.